Here is a 1003-residue protein sequence, read N- to C-terminus: MSSQPLTLQDMMAAILRFWSEQGCIIHQGYDLEVGAGTFNPATFLQALGPEPFKTAYIEPSRRPQDGRYGQHPNRLQKYHQLQVILKPVPENFLSLYLESLKVIGLNLVDHDIRFVHDDWENPTIGAWGLGWEVWLNGMEITQLTYFQAVGSKPLEAISGEITYGVERIAMYLQKKNSVYDVMWNDSLTYGDITQHAEQAWSQYNFETANTSMWLKHFEDFAAEALATLDKGLPLPAYDFVIKASHAFNMLDSRGVISVTERTRYITKIRQLARAVADKYVIWRESLGFPLLKTIPSTPTVTAKQIPHICQDEDFLLEIGSEELPAAFVPTGIQQLESLAKKLLADHNISYNNLEVLGTPRRLALRIQGLSHLTIRPEAEKKGPPLSLLFEEDGSVSSQGEQFFASHGLSISHRSALDQSSTICRVRSIKGTDYLFLVIPEERIETAAILVNELPLLIRSMRFPKKMTWDNGGVEYARPIRWLVALYGDQVLPISLGFVSSGNISWGHRQLDNRQLTIPSSKEYIDILRDACVIVSQKERRSIIEQGLQNLTGDQTVAIAPEHLIEETVFLTEHPFVICAQFNPDFCSLPKELLIAEMINHQRYFPTQNLQGEITNRFLIVCDNSPTDTIIEGNEKALAPRLTDGNFLFKQDLLTSLDSFVEKLKSVTYFDALGSLADKTARLKLHLEETYPLLPLCPKEDIDTAVHYCKADLVSAVVNEFPELQGIMGRYYLQNAALSKAAAIAVGEHLQHITLGSSVSTTGALLSILDRVDNLLSCFILGLLPTSSHDPYALRRQSLELLTLLYTTQSSVDIEDLFSRLVRHFPTTIPNTVWSPEDVLNKLCSFVWGRLKTILSSLGFAKEVIAAVLTENCPKNPLTIINSARSIQELQNTQTLETIASTHNRLKKILASLSFSVTEQIFSLITSEDMLFKQALERFKEATTSLPISSREYLLQLEDLSQSTALFLDSVRIADDDENIRNQRIALLVATQKCFGFYAWDAL.

Residues Met-1–Cys-310 form a glycine--tRNA ligase alpha subunit region. A glycine--tRNA ligase beta subunit region spans residues Gln-311–Leu-1003.

The protein belongs to the class-II aminoacyl-tRNA synthetase family.

The protein localises to the cytoplasm. The catalysed reaction is tRNA(Gly) + glycine + ATP = glycyl-tRNA(Gly) + AMP + diphosphate. The polypeptide is Glycine--tRNA ligase (glyQS) (Chlamydia muridarum (strain MoPn / Nigg)).